The sequence spans 102 residues: Large ribosomal subunit protein bL21 (102 aa).

A compositionally biased stretch (basic residues) spans 80–91 (KNSKRKKGHRQP). A disordered region spans residues 80–102 (KNSKRKKGHRQPYTKLTIDKINA).

This sequence belongs to the bacterial ribosomal protein bL21 family. In terms of assembly, part of the 50S ribosomal subunit. Contacts protein L20.

In terms of biological role, this protein binds to 23S rRNA in the presence of protein L20. In Staphylococcus aureus (strain Mu3 / ATCC 700698), this protein is Large ribosomal subunit protein bL21.